A 173-amino-acid chain; its full sequence is Ribosome maturation factor RimP (173 aa).

This sequence belongs to the RimP family.

The protein resides in the cytoplasm. Its function is as follows. Required for maturation of 30S ribosomal subunits. In Chlorobaculum tepidum (strain ATCC 49652 / DSM 12025 / NBRC 103806 / TLS) (Chlorobium tepidum), this protein is Ribosome maturation factor RimP.